Here is a 309-residue protein sequence, read N- to C-terminus: Ribosomal RNA small subunit methyltransferase H (309 aa).

Residues 33–35 (GGH), aspartate 53, phenylalanine 79, aspartate 100, and glutamine 107 contribute to the S-adenosyl-L-methionine site.

Belongs to the methyltransferase superfamily. RsmH family.

It is found in the cytoplasm. It carries out the reaction cytidine(1402) in 16S rRNA + S-adenosyl-L-methionine = N(4)-methylcytidine(1402) in 16S rRNA + S-adenosyl-L-homocysteine + H(+). Functionally, specifically methylates the N4 position of cytidine in position 1402 (C1402) of 16S rRNA. In Clostridium kluyveri (strain NBRC 12016), this protein is Ribosomal RNA small subunit methyltransferase H.